A 158-amino-acid polypeptide reads, in one-letter code: MIRIGHGFDVHAFGEDRPLIIGGVEVPYHTGFIAHSDGDVALHALTDAILGAAALGDIGKLFPDTDMQYKNADSRGLLREAFRQVQEKGYKIGNVDITIIAQAPKMRPHIDAMRAKIAEDLQCDIEQVNVKATTTEKLGFTGRQEGIACEAVALLIRQ.

Residues Asp9 and His11 each contribute to the a divalent metal cation site. Residues 9–11 and 35–36 contribute to the 4-CDP-2-C-methyl-D-erythritol 2-phosphate site; these read DVH and HS. A divalent metal cation is bound at residue His43. 4-CDP-2-C-methyl-D-erythritol 2-phosphate-binding positions include 57 to 59, 62 to 66, 133 to 136, Phe140, and Arg143; these read DIG, FPDTD, and TTTE.

The protein belongs to the IspF family. Homotrimer. It depends on a divalent metal cation as a cofactor.

It catalyses the reaction 4-CDP-2-C-methyl-D-erythritol 2-phosphate = 2-C-methyl-D-erythritol 2,4-cyclic diphosphate + CMP. Its pathway is isoprenoid biosynthesis; isopentenyl diphosphate biosynthesis via DXP pathway; isopentenyl diphosphate from 1-deoxy-D-xylulose 5-phosphate: step 4/6. Functionally, involved in the biosynthesis of isopentenyl diphosphate (IPP) and dimethylallyl diphosphate (DMAPP), two major building blocks of isoprenoid compounds. Catalyzes the conversion of 4-diphosphocytidyl-2-C-methyl-D-erythritol 2-phosphate (CDP-ME2P) to 2-C-methyl-D-erythritol 2,4-cyclodiphosphate (ME-CPP) with a corresponding release of cytidine 5-monophosphate (CMP). This is 2-C-methyl-D-erythritol 2,4-cyclodiphosphate synthase from Haemophilus influenzae (strain PittEE).